The following is a 407-amino-acid chain: Imidazolonepropionase (407 aa).

Positions 74 and 76 each coordinate Fe(3+). The Zn(2+) site is built by His74 and His76. The 4-imidazolone-5-propanoate site is built by Arg83, Tyr146, and His179. An N-formimidoyl-L-glutamate-binding site is contributed by Tyr146. Fe(3+) is bound at residue His244. Residue His244 participates in Zn(2+) binding. Gln247 is a 4-imidazolone-5-propanoate binding site. Residue Asp319 coordinates Fe(3+). Position 319 (Asp319) interacts with Zn(2+). N-formimidoyl-L-glutamate contacts are provided by Asn321 and Gly323. 4-imidazolone-5-propanoate is bound at residue Thr324.

This sequence belongs to the metallo-dependent hydrolases superfamily. HutI family. The cofactor is Zn(2+). Fe(3+) serves as cofactor.

The protein localises to the cytoplasm. The catalysed reaction is 4-imidazolone-5-propanoate + H2O = N-formimidoyl-L-glutamate. It participates in amino-acid degradation; L-histidine degradation into L-glutamate; N-formimidoyl-L-glutamate from L-histidine: step 3/3. Its function is as follows. Catalyzes the hydrolytic cleavage of the carbon-nitrogen bond in imidazolone-5-propanoate to yield N-formimidoyl-L-glutamate. It is the third step in the universal histidine degradation pathway. In Salmonella typhimurium (strain LT2 / SGSC1412 / ATCC 700720), this protein is Imidazolonepropionase.